The following is a 177-amino-acid chain: Large ribosomal subunit protein uL6 (177 aa).

A compositionally biased stretch (basic and acidic residues) spans 156–171; sequence PYKGKGVRYDTETIRR. The disordered stretch occupies residues 156 to 177; sequence PYKGKGVRYDTETIRRKEGKKK.

The protein belongs to the universal ribosomal protein uL6 family. In terms of assembly, part of the 50S ribosomal subunit.

Functionally, this protein binds to the 23S rRNA, and is important in its secondary structure. It is located near the subunit interface in the base of the L7/L12 stalk, and near the tRNA binding site of the peptidyltransferase center. The chain is Large ribosomal subunit protein uL6 from Gluconacetobacter diazotrophicus (strain ATCC 49037 / DSM 5601 / CCUG 37298 / CIP 103539 / LMG 7603 / PAl5).